The chain runs to 454 residues: Noelin-2 (454 aa).

The first 20 residues, 1 to 20 (MWPLTVPPPLLLLLCSGLAG), serve as a signal peptide directing secretion. Coiled-coil stretches lie at residues 58–85 (RDGR…LELR) and 136–193 (LEQY…AQKL). N74, N155, N275, N310, N399, and N441 each carry an N-linked (GlcNAc...) asparagine glycan. An Olfactomedin-like domain is found at 194–446 (GCGKLTGVSN…QVLYNVTLFH (253 aa)). C195 and C377 are oxidised to a cystine.

As to quaternary structure, peripherally associated with AMPAR complex. AMPAR complex consists of an inner core made of 4 pore-forming GluA/GRIA proteins (GRIA1, GRIA2, GRIA3 and GRIA4) and 4 major auxiliary subunits arranged in a twofold symmetry. One of the two pairs of distinct binding sites is occupied either by CNIH2, CNIH3 or CACNG2, CACNG3. The other harbors CACNG2, CACNG3, CACNG4, CACNG8 or GSG1L. This inner core of AMPAR complex is complemented by outer core constituents binding directly to the GluA/GRIA proteins at sites distinct from the interaction sites of the inner core constituents. Outer core constituents include at least PRRT1, PRRT2, CKAMP44/SHISA9, FRRS1L and NRN1. The proteins of the inner and outer core serve as a platform for other, more peripherally associated AMPAR constituents, including OLFM2. Alone or in combination, these auxiliary subunits control the gating and pharmacology of the AMPAR complex and profoundly impact their biogenesis and protein processing. Interacts with GRIA2. Interacts with OLFM1 and OLFM3. Interacts with SRF; the interaction promotes dissociation of SRF from the transcriptional repressor HEY2. Interacts with RUNX2. In terms of processing, N-glycosylated. Expressed in aortic smooth muscle (at protein level). In the fetus, expressed in the brain and ocular tissues including lens vesicle and optic cup.

The protein resides in the secreted. It is found in the synapse. The protein localises to the membrane. Its subcellular location is the nucleus. It localises to the cytoplasm. Involved in transforming growth factor beta (TGF-beta)-induced smooth muscle differentiation. TGF-beta induces expression and translocation of OLFM2 to the nucleus where it binds to SRF, causing its dissociation from the transcriptional repressor HEY2/HERP1 and facilitating binding of SRF to target genes. Plays a role in AMPAR complex organization. Is a regulator of vascular smooth-muscle cell (SMC) phenotypic switching, that acts by promoting RUNX2 and inhibiting MYOCD binding to SRF. SMC phenotypic switching is the process through which vascular SMCs undergo transition between a quiescent contractile phenotype and a proliferative synthetic phenotype in response to pathological stimuli. SMC phenotypic plasticity is essential for vascular development and remodeling. The chain is Noelin-2 (OLFM2) from Homo sapiens (Human).